The chain runs to 475 residues: F-box protein SKIP22 (475 aa).

A disordered region spans residues 114-133 (DQAKSNPNTSVEDPEGDISG). The F-box domain maps to 319–365 (PPCLMRLPTELKLKILELLPGVSIGNMACVCTEMRYLASDNDLWKQK).

Part of a SCF (ASK-cullin-F-box) protein ligase complex. Interacts with SKP1A/ASK1 and SPK1B/ASK2.

Its subcellular location is the nucleus. Its pathway is protein modification; protein ubiquitination. Its function is as follows. Component of SCF(ASK-cullin-F-box) E3 ubiquitin ligase complexes, which may mediate the ubiquitination and subsequent proteasomal degradation of target proteins. The polypeptide is F-box protein SKIP22 (SKIP22) (Arabidopsis thaliana (Mouse-ear cress)).